We begin with the raw amino-acid sequence, 819 residues long: Nonribosomal peptide synthetase 9 (819 aa).

The interval 202-591 (LQAPTQHAVR…GRKDTQAKIR (390 aa)) is adenylation (A) domain. In terms of domain architecture, Carrier spans 722-798 (QPRNERERLI…SLAEFLSSSS (77 aa)). O-(pantetheine 4'-phosphoryl)serine is present on serine 759.

It belongs to the NRP synthetase family.

It participates in secondary metabolite biosynthesis. In terms of biological role, nonribosomal peptide synthetase; part of the Fg3_54/C64 gene cluster that mediates the biosynthesis of the octapeptide fusaoctaxin A, a virulence factor that is required for cell-to-cell invasiveness of plant host. The 2 nonribosomal peptide synthetases NRPS9 and NRPS5 form an assembly line which likely utilizes GABA as a starter unit (loaded on the unique module M1 of NRPS9) and sequentially incorporates seven extender units composed of the residues L-Ala, L-allo-Ile, L-Ser, L-Val, L-Ser, L-Leu and L-Leu, respectively. During the process, each of the residues that are tethered on modules M3-M7 of NRPS5 containing an E domain can undergo an epimerization reaction to produce a D-configuration before the transpeptidation reaction occurs. The elongation of the peptidyl chain might be terminated by module M8-mediated L-Leu incorporation, followed by R domain-catalyzed 4 electron reduction to release the resulting octapeptide from the assembly line as an alcohol. Fusaoctaxin A is cleaved by the cluster specific ABC transporter FGM5 to the pentapeptide fusapentaxin A and the tripeptide fusatrixin A. The other enzymes from the cluster, FGM1, FGM2, FGM3 and FGM9 seem not to be involved in the biosynthesis of fusaoctaxin A and their functions have still to be determined. The chain is Nonribosomal peptide synthetase 9 from Gibberella zeae (strain ATCC MYA-4620 / CBS 123657 / FGSC 9075 / NRRL 31084 / PH-1) (Wheat head blight fungus).